A 56-amino-acid chain; its full sequence is Large ribosomal subunit protein bL33 (56 aa).

This sequence belongs to the bacterial ribosomal protein bL33 family.

The protein is Large ribosomal subunit protein bL33 of Histophilus somni (strain 129Pt) (Haemophilus somnus).